Reading from the N-terminus, the 342-residue chain is (+)-pulegone reductase (342 aa).

Residues Gly-163 to Gly-166, Lys-189, Tyr-205, Asn-229, Cys-251 to Tyr-257, Phe-281 to Val-283, and Asn-331 each bind NADP(+).

The protein belongs to the NADP-dependent oxidoreductase L4BD family.

The protein localises to the cytoplasm. The catalysed reaction is (2R,5R)-isomenthone + NADP(+) = (R)-pulegone + NADPH + H(+). It carries out the reaction (1R,4S)-menthone + NADP(+) = (R)-pulegone + NADPH + H(+). It participates in secondary metabolite biosynthesis; terpenoid biosynthesis. With respect to regulation, not inhibited by (+)-menthofuran. Monoterpene synthase that catalyzes the specific reduction of the 4,8-double bond of (+)-pulegone to produce both (-)-menthone and (+)-isomenthone in a 70:30 ratio. Unable to utilize either (-)-isopiperitenone or (+)-cis-isopulegone, or to catalyze the reverse reaction with (-)-menthone or (+)-isomenthone. Has an absolute requirement for NADPH. The chain is (+)-pulegone reductase from Mentha piperita (Peppermint).